The sequence spans 278 residues: MALKSYNPTSPARRGLVLVDKSALWKGKPVKALTEGKRKTGGRNNKGHVTSRGIAGGHKQKYRYVDFKRRKWDMPATVERLEYDPNRTAFIALVKYEDGELAYILAPQRLGVGDQVIAGEKTDVKPGNAMLLSQMPVGTIIHNVEMKPGKGGQIARSAGTYVQLVGRDRGMVIVRLNSGEQRYLRGDCMGTVGAVSNPDNGNQNLAKAGRNRWLGKRPLTRGVAKNPVDHPHGGGEGRTSGGRHPVTPWGKPTKGARTRHNKATDKMIIRSRHAKKKR.

2 disordered regions span residues 33–53 (LTEG…TSRG) and 221–278 (RGVA…KKKR). Residues 269–278 (IRSRHAKKKR) show a composition bias toward basic residues.

The protein belongs to the universal ribosomal protein uL2 family. Part of the 50S ribosomal subunit. Forms a bridge to the 30S subunit in the 70S ribosome.

Functionally, one of the primary rRNA binding proteins. Required for association of the 30S and 50S subunits to form the 70S ribosome, for tRNA binding and peptide bond formation. It has been suggested to have peptidyltransferase activity; this is somewhat controversial. Makes several contacts with the 16S rRNA in the 70S ribosome. This is Large ribosomal subunit protein uL2 from Novosphingobium aromaticivorans (strain ATCC 700278 / DSM 12444 / CCUG 56034 / CIP 105152 / NBRC 16084 / F199).